Reading from the N-terminus, the 206-residue chain is MKQRLVQLIAQTELQVTEQQVQQLVGYVELLHKWNKAYNLTSVRDPNEMLVKHIMDSIVVSAHLQGENFIDVGTGPGLPGIPLAIMCPEKNFTLLDSLGKRIRFIKQVVHELKIANVTPVQSRVEEFQPEQGFDGVISRAFASMNDMVSWCHHLPAENGHFLALKGQFSEQEVAELPEWCSVTEVKPLQIPELEGKRHLVILTAKK.

Residues Gly73, Leu78, 124–125 (VE), and Arg139 contribute to the S-adenosyl-L-methionine site.

This sequence belongs to the methyltransferase superfamily. RNA methyltransferase RsmG family.

Its subcellular location is the cytoplasm. The enzyme catalyses guanosine(527) in 16S rRNA + S-adenosyl-L-methionine = N(7)-methylguanosine(527) in 16S rRNA + S-adenosyl-L-homocysteine. Functionally, specifically methylates the N7 position of guanine in position 527 of 16S rRNA. This Photobacterium profundum (strain SS9) protein is Ribosomal RNA small subunit methyltransferase G.